A 488-amino-acid polypeptide reads, in one-letter code: Probable malate:quinone oxidoreductase (488 aa).

Belongs to the MQO family. FAD is required as a cofactor.

The catalysed reaction is (S)-malate + a quinone = a quinol + oxaloacetate. Its pathway is carbohydrate metabolism; tricarboxylic acid cycle; oxaloacetate from (S)-malate (quinone route): step 1/1. This chain is Probable malate:quinone oxidoreductase, found in Neisseria meningitidis serogroup B (strain ATCC BAA-335 / MC58).